The sequence spans 392 residues: Protein O-glucosyltransferase 1 (392 aa).

The N-terminal stretch at 1-23 is a signal peptide; sequence MELGVSSQLWLWLLLLLLPPVPG. 4 disulfides stabilise this stretch: C49-C56, C54-C357, C102-C108, and C263-C286. N-linked (GlcNAc...) asparagine glycosylation is present at N53. The segment at 103–107 is interaction with the consensus sequence C-X-S-X-[PA]-C in peptide substrates; it reads MFPSR. The active-site Proton donor/acceptor is D133. An interaction with the consensus sequence C-X-S-X-[PA]-C in peptide substrates region spans residues 172–178; sequence AVWPIYP. Y177 provides a ligand contact to UDP-alpha-D-glucose. N204 carries an N-linked (GlcNAc...) asparagine glycan. UDP-alpha-D-glucose is bound by residues S212, R218, and 274–279; that span reads VAASFR. A glycan (N-linked (GlcNAc...) asparagine) is linked at N373. The short motif at 389–392 is the Prevents secretion from ER element; it reads KIEL.

This sequence belongs to the glycosyltransferase 90 family.

The protein localises to the endoplasmic reticulum lumen. The enzyme catalyses L-seryl-[EGF-like domain protein] + UDP-alpha-D-xylose = 3-O-(beta-D-xylosyl)-L-seryl-[EGF-like domain protein] + UDP + H(+). It carries out the reaction L-seryl-[EGF-like domain protein] + UDP-alpha-D-glucose = 3-O-(beta-D-glucosyl)-L-seryl-[EGF-like domain protein] + UDP + H(+). Its pathway is protein modification; protein glycosylation. Its function is as follows. Dual specificity glycosyltransferase that catalyzes the transfer of glucose and xylose from UDP-glucose and UDP-xylose, respectively, to a serine residue found in the consensus sequence of C-X-S-X-P-C. Specifically targets extracellular EGF repeats of protein such as CRB2, F7, F9 and NOTCH2. Acts as a positive regulator of Notch signaling by mediating O-glucosylation of Notch, leading to regulate muscle development. Notch glucosylation does not affect Notch ligand binding. Required during early development to promote gastrulation: acts by mediating O-glucosylation of CRB2, which is required for CRB2 localization to the cell membrane. The protein is Protein O-glucosyltransferase 1 (POGLUT1) of Bos taurus (Bovine).